Here is a 117-residue protein sequence, read N- to C-terminus: Ig heavy chain V region MOPC 173 (117 aa).

Positions 1–116 (EVKLLESGGP…WGQGTSVTVS (116 aa)) constitute an Ig-like domain. A disulfide bond links Cys22 and Cys96.

The sequence is that of Ig heavy chain V region MOPC 173 from Mus musculus (Mouse).